A 473-amino-acid polypeptide reads, in one-letter code: MNAAVIDSNSAQDYVVADIALAGWGRKELNIAETEMPGLVQIRDEYKAQQPLKGARIAGSLHMTIQTGVLIETLKALGADVRWASCNIFSTQDHAAAAIVEAGTPVFAFKGESLDEYWEFSHRIFEWPNGEFANMILDDGGDATLLLILGSKAEKDRSVIAKPTNEEEVALFKSIERHLEIDGSWYSKRLAHIKGVTEETTTGVHRLYQMEKDGRLPFPAFNVNDSVTKSKFDNLYGCRESLVDGIKRATDVMIAGKIAVVAGYGDVGKGCAQSLRGLGATVWVTEIDPICALQAAMEGYRVVTMEYAADKADIFVTATGNYHVINHDHMKAMRHNAIVCNIGHFDSEIDVASTRQYQWENIKPQVDHIIFPDGKRVILLAEGRLVNLGCATGHPSFVMSNSFTNQTLAQIELFTRGGEYANKVYVLPKHLDEKVARLHLARIGAQLSELSDDQAAYIGVPKAGPFKPDHYRY.

The substrate site is built by Thr64, Asp139, and Glu199. Residue Thr200 to Thr202 coordinates NAD(+). Substrate-binding residues include Lys229 and Asp233. NAD(+)-binding positions include Asn234, Gly263–Gly268, Glu286, Asn321, Ile342–His344, and Asn387.

This sequence belongs to the adenosylhomocysteinase family. NAD(+) serves as cofactor.

It localises to the cytoplasm. It carries out the reaction S-adenosyl-L-homocysteine + H2O = L-homocysteine + adenosine. The protein operates within amino-acid biosynthesis; L-homocysteine biosynthesis; L-homocysteine from S-adenosyl-L-homocysteine: step 1/1. Its function is as follows. May play a key role in the regulation of the intracellular concentration of adenosylhomocysteine. The sequence is that of Adenosylhomocysteinase from Burkholderia thailandensis (strain ATCC 700388 / DSM 13276 / CCUG 48851 / CIP 106301 / E264).